Consider the following 319-residue polypeptide: MSEECIENPERIKIGTDLINIRNKMNLKELIHPNEDENSTLLILNQKIDIPRPLFYKIWKLHDLKVCADGAANRLYDYLDDDETLRIKYLPNYIIGDLDSLSEKVYKYYRKNKVTIIKQTTQYSTDFTKCVNLISLHFNSPEFRSLISNKDNLQSNHGIELEKGIHTLYNTMTESLVFSKVTPISLLALGGIGGRFDQTVHSITQLYTLSENASYFKLCYMTPTDLIFLIKKNGTLIEYDPQFRNTCIGNCGLLPIGEATLVKETRGLKWDVKNWPTSVVTGRVSSSNRFVGDNCCFIDTKDDIILNVEIFVDKLIDFL.

Position 2 is an N-acetylserine (S2).

This sequence belongs to the thiamine pyrophosphokinase family. As to quaternary structure, homodimer.

It catalyses the reaction thiamine + ATP = thiamine diphosphate + AMP + H(+). It functions in the pathway cofactor biosynthesis; thiamine diphosphate biosynthesis; thiamine diphosphate from thiamine: step 1/1. Essential protein, it is the only enzyme in yeast capable of synthesizing thiamine pyrophosphate (TPP). In Saccharomyces cerevisiae (strain ATCC 204508 / S288c) (Baker's yeast), this protein is Thiamine pyrophosphokinase.